The sequence spans 80 residues: RNA-binding protein Hfq (80 aa).

Positions 10-70 constitute a Sm domain; that stretch reads DIFLNQVRKE…ISTISPMKSV (61 aa).

Belongs to the Hfq family. Homohexamer.

In terms of biological role, RNA chaperone that binds small regulatory RNA (sRNAs) and mRNAs to facilitate mRNA translational regulation in response to envelope stress, environmental stress and changes in metabolite concentrations. Also binds with high specificity to tRNAs. The polypeptide is RNA-binding protein Hfq (Ruminiclostridium cellulolyticum (strain ATCC 35319 / DSM 5812 / JCM 6584 / H10) (Clostridium cellulolyticum)).